A 419-amino-acid chain; its full sequence is 26S proteasome regulatory subunit 8 homolog A (419 aa).

Ala-2 bears the N-acetylalanine mark. 202-209 (GPPGTGKT) is an ATP binding site. A Glycyl lysine isopeptide (Lys-Gly) (interchain with G-Cter in ubiquitin) cross-link involves residue Lys-406.

It belongs to the AAA ATPase family. In terms of assembly, component of the 19S regulatory particle (RP/PA700) base subcomplex of the 26S proteasome. The 26S proteasome is composed of a core protease (CP), known as the 20S proteasome, capped at one or both ends by the 19S regulatory particle (RP/PA700). The RP/PA700 complex is composed of at least 17 different subunits in two subcomplexes, the base and the lid, which form the portions proximal and distal to the 20S proteolytic core, respectively.

Its subcellular location is the cytoplasm. The protein localises to the nucleus. Its function is as follows. The 26S proteasome is involved in the ATP-dependent degradation of ubiquitinated proteins. The regulatory (or ATPase) complex confers ATP dependency and substrate specificity to the 26S complex. The sequence is that of 26S proteasome regulatory subunit 8 homolog A (RPT6A) from Arabidopsis thaliana (Mouse-ear cress).